The primary structure comprises 124 residues: Large ribosomal subunit protein bL12 (124 aa).

Residues 93-124 (GAPSTVKEGASKDEAEEAKKKLEEAGASVELK) are disordered. A compositionally biased stretch (basic and acidic residues) spans 101–116 (GASKDEAEEAKKKLEE).

It belongs to the bacterial ribosomal protein bL12 family. In terms of assembly, homodimer. Part of the ribosomal stalk of the 50S ribosomal subunit. Forms a multimeric L10(L12)X complex, where L10 forms an elongated spine to which 2 to 4 L12 dimers bind in a sequential fashion. Binds GTP-bound translation factors.

In terms of biological role, forms part of the ribosomal stalk which helps the ribosome interact with GTP-bound translation factors. Is thus essential for accurate translation. The protein is Large ribosomal subunit protein bL12 of Marinobacter nauticus (strain ATCC 700491 / DSM 11845 / VT8) (Marinobacter aquaeolei).